The primary structure comprises 126 residues: uncharacterized protein (126 aa).

This is an uncharacterized protein from Escherichia coli (strain K12).